A 60-amino-acid chain; its full sequence is Large ribosomal subunit protein bL32 (60 aa).

The protein belongs to the bacterial ribosomal protein bL32 family.

This Geobacter sulfurreducens (strain ATCC 51573 / DSM 12127 / PCA) protein is Large ribosomal subunit protein bL32.